Reading from the N-terminus, the 118-residue chain is HTH-type transcriptional regulator SarT (118 aa).

The segment at residues 55-78 is a DNA-binding region (H-T-H motif); that stretch reads MRDIISYIGIDQSRIVKSVKDLSK.

This sequence belongs to the SarA family.

The protein resides in the cytoplasm. Functionally, transcriptional regulator acting as an intermediary between major regulators sarA and agr and virulence genes. Represses alpha-hemolysin (hla) gene expression. Down-regulates agr RNAIII expression by repressing sarU, a positive activator of agr expression. Up-regulates sarS, which induces the expression of the cell wall-associated protein A (spa). This chain is HTH-type transcriptional regulator SarT (sarT), found in Staphylococcus aureus (strain NCTC 8325 / PS 47).